A 469-amino-acid polypeptide reads, in one-letter code: Spliceosome-associated protein CWC27 homolog (469 aa).

Ser-2 carries the N-acetylserine modification. Positions 11–166 constitute a PPIase cyclophilin-type domain; the sequence is TNGKVLLKTT…NPHRIKSCEV (156 aa). The span at 175-193 shows a compositional bias: basic and acidic residues; the sequence is TPREIKKPKNEKPEEEVKK. Disordered stretches follow at residues 175–415 and 428–469; these read TPRE…DDEG and RKVK…KERR. Residues 206–229 adopt a coiled-coil conformation; it reads SFGEEAEEEEEEVNRVSQSMKGRS. The segment covering 231-241 has biased composition (basic and acidic residues); that stretch reads SSHDLLKDDPH. A compositionally biased stretch (acidic residues) spans 256–278; it reads TGDLEDDGEDDSAERDEYMEDDE. Basic and acidic residues-rich tracts occupy residues 302-341 and 356-368; these read GDGE…KVEE and EYRR…EALR. Residues 309 to 371 are a coiled coil; that stretch reads ASRSEELRKE…QKYEALRKQQ (63 aa). The segment covering 384-403 has biased composition (polar residues); the sequence is ALLSQFKSKLTQAITETPEN. Basic and acidic residues predominate over residues 454–469; the sequence is RREESKKLLREKKERR.

This sequence belongs to the cyclophilin-type PPIase family. As to quaternary structure, part of the activated spliceosome B/catalytic step 1 spliceosome, one of the forms of the spliceosome which has a well-formed active site but still cannot catalyze the branching reaction and is composed at least of 52 proteins, the U2, U5 and U6 snRNAs and the pre-mRNA. Recruited during early steps of activated spliceosome B maturation, it is probably one of the first proteins released from this complex as he matures to the spliceosome C complex. Component of the minor spliceosome, which splices U12-type introns.

It localises to the nucleus. As part of the spliceosome, plays a role in pre-mRNA splicing. Probable inactive PPIase with no peptidyl-prolyl cis-trans isomerase activity. As a component of the minor spliceosome, involved in the splicing of U12-type introns in pre-mRNAs. The sequence is that of Spliceosome-associated protein CWC27 homolog from Mus musculus (Mouse).